The primary structure comprises 230 residues: Sodium channel modifier 1 (230 aa).

S2 is subject to Phosphoserine. The short motif at 4–20 (KREGDDWSQLNVLKKRR) is the Bipartite nuclear localization signal element. Residues 42–74 (FACAICPHRPVLDTLAMLTAHRAGKKHLSSLQL) form a Matrin-type zinc finger. Residue K67 forms a Glycyl lysine isopeptide (Lys-Gly) (interchain with G-Cter in SUMO2) linkage. 2 disordered regions span residues 76 to 106 (YGKK…EAPL) and 129 to 191 (RRKY…RALD). Residues 89–100 (PRQHNELRREET) show a composition bias toward basic and acidic residues. The span at 142-151 (SRPPLPPPEV) shows a compositional bias: pro residues. Over residues 167 to 180 (GSQTKESATVSSPA) the composition is skewed to polar residues. Phosphoserine is present on residues S183 and S219. A required for interaction with LUC7L2 region spans residues 188-230 (RALDHYLTLRSSGWIPDGRGRWIKDENVEFDSDEEEPPDLPLD).

As to quaternary structure, component of the minor spliceosome. Within this complex, interacts with RNF113A, as well as with SF3B1/SF3b155, SF3B2/SF3b145, SF3B3/SF3b130 and CDC5L. May interact with LUC7L2 and SNRNP70.

It is found in the nucleus. It localises to the nucleoplasm. The protein resides in the nucleus speckle. Functionally, as a component of the minor spliceosome, involved in the splicing of U12-type introns in pre-mRNAs. Plays a role in the regulation of primary cilia length and Hedgehog signaling. This is Sodium channel modifier 1 (SCNM1) from Bos taurus (Bovine).